The primary structure comprises 131 residues: Holo-[acyl-carrier-protein] synthase (131 aa).

Asp8 and Glu63 together coordinate Mg(2+).

It belongs to the P-Pant transferase superfamily. AcpS family. Mg(2+) is required as a cofactor.

It localises to the cytoplasm. The enzyme catalyses apo-[ACP] + CoA = holo-[ACP] + adenosine 3',5'-bisphosphate + H(+). Functionally, transfers the 4'-phosphopantetheine moiety from coenzyme A to a Ser of acyl-carrier-protein. The polypeptide is Holo-[acyl-carrier-protein] synthase (Shewanella piezotolerans (strain WP3 / JCM 13877)).